We begin with the raw amino-acid sequence, 185 residues long: MADGPGSPGGGGGSHESGSPRGGGGGGGGGGGGGGVREQDRFLPIANISRIMKKAIPANGKIAKDAKETVQECVSEFISFITSEASDKCQREKRKTINGDDLLWAMATLGFEDYIEPLKVYLQKYREMEGDSKLTAKAGDGSVKKDVLGSHGGSSSSAQGMGQQAAYNQGMGYMQPQYHNGDVSN.

A compositionally biased stretch (gly residues) spans 1-36 (MADGPGSPGGGGGSHESGSPRGGGGGGGGGGGGGGV). Residues 1-39 (MADGPGSPGGGGGSHESGSPRGGGGGGGGGGGGGGVREQ) form a disordered region. Residues 43-49 (LPIANIS) mediate DNA binding. A subunit association domain (SAD) region spans residues 70–81 (VQECVSEFISFI). Residues 145 to 164 (KDVLGSHGGSSSSAQGMGQQ) are disordered. Residues 153–164 (GSSSSAQGMGQQ) are compositionally biased toward low complexity.

It belongs to the NFYB/HAP3 subunit family. Heterotrimeric transcription factor composed of three components, NF-YA, NF-YB and NF-YC. NF-YB and NF-YC must interact and dimerize for NF-YA association and DNA binding. As to expression, ubiquitous.

It is found in the nucleus. Functionally, component of the NF-Y/HAP transcription factor complex. The NF-Y complex stimulates the transcription of various genes by recognizing and binding to a CCAAT motif in promoters. May regulate the expression of photosynthetic genes, and may be involved in chloroplast and amyloplast development. The chain is Nuclear transcription factor Y subunit B-3 (NFYB3) from Oryza sativa subsp. japonica (Rice).